A 567-amino-acid polypeptide reads, in one-letter code: MTELDKRHRSSIYDSMVKSPNRAMLRATGMTDKDFETSIVGVISTWAENTPCNIHLHDFGKLAKEGVKSAGAWPVQFGTITVADGIAMGTPGMRFSLTSRDIIADSIEAAMSGHNVDAFVAIGGCDKNMPGSMIAIANMDIPAIFAYGGTIAPGNLDGKDIDLVSVFEGIGKWNHGDMTAEDVKRLECNACPGPGGCGGMYTANTMATAIEVLGMSLPGSSSHPAESADKKEDIEAAGRAVVKMLELGLKPSDILTREAFEDAITVTMALGGSTNATLHLLAIAHAANVDLSLEDFNTIQERVPHLADLKPSGQYVFQDLYEVGGVPAVMKYLLANGFLHGDRITCTGKTVAENLADFADLTPGQKVIMPLENPKRADGPLIILNGNLAPDGAVAKVSGVKVRRHVGPAKVFDSEEDAIQAVLTDEIVDGDVVVVRFVGPKGGPGMPEMLSLSSMIVGKGQGDKVALLTDGRFSGGTYGLVVGHIAPEAQDGGPIAYLRTGDIVTVDQDTKEISMAVSEEELEKRKAETTLPPLYSRGVLGKYAYIVSSASRGAVTDFWNMDKSGKK.

Cysteine 52 contacts [2Fe-2S] cluster. Aspartate 84 contacts Mg(2+). Residue cysteine 125 participates in [2Fe-2S] cluster binding. Mg(2+) contacts are provided by aspartate 126 and lysine 127. Residue lysine 127 is modified to N6-carboxylysine. Cysteine 197 contacts [2Fe-2S] cluster. Residue glutamate 448 coordinates Mg(2+). Residue serine 474 is the Proton acceptor of the active site.

This sequence belongs to the IlvD/Edd family. As to quaternary structure, homodimer. [2Fe-2S] cluster serves as cofactor. Requires Mg(2+) as cofactor.

It carries out the reaction (2R)-2,3-dihydroxy-3-methylbutanoate = 3-methyl-2-oxobutanoate + H2O. It catalyses the reaction (2R,3R)-2,3-dihydroxy-3-methylpentanoate = (S)-3-methyl-2-oxopentanoate + H2O. Its pathway is amino-acid biosynthesis; L-isoleucine biosynthesis; L-isoleucine from 2-oxobutanoate: step 3/4. The protein operates within amino-acid biosynthesis; L-valine biosynthesis; L-valine from pyruvate: step 3/4. Functionally, functions in the biosynthesis of branched-chain amino acids. Catalyzes the dehydration of (2R,3R)-2,3-dihydroxy-3-methylpentanoate (2,3-dihydroxy-3-methylvalerate) into 2-oxo-3-methylpentanoate (2-oxo-3-methylvalerate) and of (2R)-2,3-dihydroxy-3-methylbutanoate (2,3-dihydroxyisovalerate) into 2-oxo-3-methylbutanoate (2-oxoisovalerate), the penultimate precursor to L-isoleucine and L-valine, respectively. This is Dihydroxy-acid dehydratase from Streptococcus pneumoniae (strain CGSP14).